The primary structure comprises 343 residues: UDP-3-O-acylglucosamine N-acyltransferase (343 aa).

H239 (proton acceptor) is an active-site residue.

The protein belongs to the transferase hexapeptide repeat family. LpxD subfamily. In terms of assembly, homotrimer.

The catalysed reaction is a UDP-3-O-[(3R)-3-hydroxyacyl]-alpha-D-glucosamine + a (3R)-hydroxyacyl-[ACP] = a UDP-2-N,3-O-bis[(3R)-3-hydroxyacyl]-alpha-D-glucosamine + holo-[ACP] + H(+). It participates in bacterial outer membrane biogenesis; LPS lipid A biosynthesis. Catalyzes the N-acylation of UDP-3-O-acylglucosamine using 3-hydroxyacyl-ACP as the acyl donor. Is involved in the biosynthesis of lipid A, a phosphorylated glycolipid that anchors the lipopolysaccharide to the outer membrane of the cell. This Vibrio vulnificus (strain YJ016) protein is UDP-3-O-acylglucosamine N-acyltransferase.